The following is a 201-amino-acid chain: Peptidyl-tRNA hydrolase (201 aa).

Y15 lines the tRNA pocket. The active-site Proton acceptor is the H20. TRNA contacts are provided by Y66, N68, and N114.

The protein belongs to the PTH family. As to quaternary structure, monomer.

It localises to the cytoplasm. It carries out the reaction an N-acyl-L-alpha-aminoacyl-tRNA + H2O = an N-acyl-L-amino acid + a tRNA + H(+). Functionally, hydrolyzes ribosome-free peptidyl-tRNAs (with 1 or more amino acids incorporated), which drop off the ribosome during protein synthesis, or as a result of ribosome stalling. Catalyzes the release of premature peptidyl moieties from peptidyl-tRNA molecules trapped in stalled 50S ribosomal subunits, and thus maintains levels of free tRNAs and 50S ribosomes. This chain is Peptidyl-tRNA hydrolase, found in Burkholderia mallei (strain NCTC 10247).